A 340-amino-acid chain; its full sequence is Protein phosphatase PTC7 homolog fig (340 aa).

A PPM-type phosphatase domain is found at 58–314; it reads RAQAETIQAP…DDITVVLASV (257 aa). Mn(2+)-binding residues include D90, G91, and D236.

It belongs to the PP2C family. It depends on Mg(2+) as a cofactor. Requires Mn(2+) as cofactor.

The enzyme catalyses O-phospho-L-seryl-[protein] + H2O = L-seryl-[protein] + phosphate. It carries out the reaction O-phospho-L-threonyl-[protein] + H2O = L-threonyl-[protein] + phosphate. This Drosophila pseudoobscura pseudoobscura (Fruit fly) protein is Protein phosphatase PTC7 homolog fig.